The sequence spans 396 residues: Elongation factor Tu (396 aa).

A tr-type G domain is found at 10–206 (KPHVNVGTIG…ALDTYIPTPE (197 aa)). Residues 19–26 (GHVDHGKT) are G1. Residue 19–26 (GHVDHGKT) coordinates GTP. Thr26 is a Mg(2+) binding site. Residues 60-64 (GITIN) form a G2 region. Positions 81 to 84 (DCPG) are G3. Residues 81 to 85 (DCPGH) and 136 to 139 (NKCD) contribute to the GTP site. The tract at residues 136–139 (NKCD) is G4. Residues 174-176 (SAK) are G5.

Belongs to the TRAFAC class translation factor GTPase superfamily. Classic translation factor GTPase family. EF-Tu/EF-1A subfamily. In terms of assembly, monomer.

Its subcellular location is the cytoplasm. The catalysed reaction is GTP + H2O = GDP + phosphate + H(+). GTP hydrolase that promotes the GTP-dependent binding of aminoacyl-tRNA to the A-site of ribosomes during protein biosynthesis. The sequence is that of Elongation factor Tu from Thiomonas delicata (Thiomonas cuprina).